The sequence spans 1008 residues: Probable beta-galactosidase B (1008 aa).

The signal sequence occupies residues 1-18; sequence MLLQSLFAWALAIGPCIA. N-linked (GlcNAc...) asparagine glycosylation is found at asparagine 20 and asparagine 23. Residue tyrosine 87 coordinates substrate. Residue asparagine 108 is glycosylated (N-linked (GlcNAc...) asparagine). 4 residues coordinate substrate: asparagine 132, alanine 133, glutamate 134, and asparagine 192. The active-site Proton donor is glutamate 193. Asparagine 208 is a glycosylation site (N-linked (GlcNAc...) asparagine). A substrate-binding site is contributed by tyrosine 262. A disulfide bridge connects residues cysteine 268 and cysteine 321. Asparagine 269 carries an N-linked (GlcNAc...) asparagine glycan. Glutamate 305 serves as the catalytic Nucleophile. Position 370 (tyrosine 370) interacts with substrate. Residues asparagine 453, asparagine 594, asparagine 624, asparagine 681, asparagine 703, asparagine 782, asparagine 788, asparagine 816, asparagine 826, and asparagine 879 are each glycosylated (N-linked (GlcNAc...) asparagine).

The protein belongs to the glycosyl hydrolase 35 family.

It localises to the secreted. The enzyme catalyses Hydrolysis of terminal non-reducing beta-D-galactose residues in beta-D-galactosides.. In terms of biological role, cleaves beta-linked terminal galactosyl residues from gangliosides, glycoproteins, and glycosaminoglycans. The chain is Probable beta-galactosidase B (lacB) from Sclerotinia sclerotiorum (strain ATCC 18683 / 1980 / Ss-1) (White mold).